Reading from the N-terminus, the 95-residue chain is Small ribosomal subunit protein bS20 (95 aa).

It belongs to the bacterial ribosomal protein bS20 family.

Its function is as follows. Binds directly to 16S ribosomal RNA. This chain is Small ribosomal subunit protein bS20, found in Fervidobacterium nodosum (strain ATCC 35602 / DSM 5306 / Rt17-B1).